Consider the following 426-residue polypeptide: MSKTNESLLKRRQAAVPRGVGQIHPVVAERAENSTVWDVEGREYIDFAGGIAVLNTGHLHPKVIAAVQEQLGKLSHTCFQVLAYEPYIELAEEIAKRVPGDFPKKTLLVTSGSEAVENAVKIARAATGRAGVIAFTGAYHGRTMMTLGLTGKVVPYSAGMGLMPGGIFRALAPCELHGVSEDDSIASIERIFKNDAQPQDIAAIIIEPVQGEGGFYVNSKSFMQRLRALCDQHGILLIADEVQTGAGRTGTFFATEQLGIVPDLTTFAKSVGGGFPISGVAGKAEIMDAIAPGGLGGTYAGSPIACAAALAVLKVFEEEKLLERSQAVGERLKAGLREIQAKHKVIGDVRGLGSMVAIELFEGGDTHKPAAELVSKIVVRAREKGLILLSCGTYYNVIRFLMPVTIPDAQLEKGLAILAECFDELA.

Pyridoxal 5'-phosphate-binding positions include 112 to 113 (GS), tyrosine 139, and 240 to 243 (DEVQ). Lysine 269 is modified (N6-(pyridoxal phosphate)lysine). Position 298 (threonine 298) interacts with pyridoxal 5'-phosphate.

The protein belongs to the class-III pyridoxal-phosphate-dependent aminotransferase family. It depends on pyridoxal 5'-phosphate as a cofactor.

It carries out the reaction 5-aminopentanoate + 2-oxoglutarate = 5-oxopentanoate + L-glutamate. Functionally, catalyzes the conversion of 5-aminovalerate to 5-oxopentanoate. The polypeptide is 5-aminovalerate aminotransferase DavT (davT) (Pseudomonas aeruginosa (strain ATCC 15692 / DSM 22644 / CIP 104116 / JCM 14847 / LMG 12228 / 1C / PRS 101 / PAO1)).